The primary structure comprises 1239 residues: Inner tegument protein (1239 aa).

Over residues 1 to 10 (MASAMESDSS) the composition is skewed to low complexity. 3 disordered regions span residues 1–20 (MASA…DAQP), 672–708 (GESP…GGPW), and 1090–1239 (GRNA…AEDE). The segment at 618-1239 (NELPKTRSLA…RPPRPTAEDE (622 aa)) is interaction with large tegument protein. Residues 1115–1126 (DSSPFSFSSSDF) are compositionally biased toward low complexity. Positions 1127-1136 (SDQDEGEGGE) are enriched in acidic residues. A compositionally biased stretch (low complexity) spans 1181 to 1190 (RTTPSPSRRA). Residues 1219–1232 (VRPRTRRGATRRPP) are compositionally biased toward basic residues.

The protein belongs to the herpesviridae inner tegument protein family. In terms of assembly, interacts (via C-terminus) with the large tegument protein/LTP (via N-terminus).

The protein localises to the virion tegument. Its subcellular location is the host cytoplasm. The protein resides in the host nucleus. It is found in the host Golgi apparatus. It localises to the host trans-Golgi network. Plays an essential role in cytoplasmic secondary envelopment during viral egress. Interacts with the capsid via the large tegument protein/LTP and participates in its transport to the host trans-Golgi network (TGN) where secondary envelopment occurs. Modulates tegumentation and capsid accumulation at the viral assembly complex. The sequence is that of Inner tegument protein from Homo sapiens (Human).